The sequence spans 649 residues: Solute carrier family 22 member 17 (649 aa).

A disordered region spans residues 1–70 (MAPRVATGTP…GGDGLGSSLS (70 aa)). Positions 24–34 (VEITPTSNGQV) are enriched in polar residues. The segment covering 47–57 (QGEREREREGE) has biased composition (basic and acidic residues). Asn-134 and Asn-143 each carry an N-linked (GlcNAc...) asparagine glycan. 11 helical membrane passes run 211-231 (VILEQILFILGFASGYLFLGY), 240-260 (GIVLLTLGLVGPCGVGGAAAG), 265-285 (VMALRFLLGFLLAGVDLGVYL), 300-320 (ALAGELVGVGGHFLFLGLALV), 330-350 (MITAPCILFLFYGWPGLFLES), 414-433 (NIWKNLLILGFTNFIAHAIR), 448-468 (FYLCSLLASGTAALACVFLGV), 477-497 (GILLLSMTLTGIASLVLLGLW), 526-546 (FSVLGLFSSQAAAILSTLLAA), 557-577 (GLGLIMALGALGGLSGPAQRL), and 584-604 (FLQHVVLAACALLCILSIMLL).

It belongs to the major facilitator (TC 2.A.1) superfamily. Organic cation transporter (TC 2.A.1.19) family. Expressed in brain.

It localises to the cell membrane. It is found in the vacuole membrane. Cell surface receptor for LCN2 (24p3) that plays a key role in iron homeostasis and transport. Able to bind iron-bound LCN2 (holo-24p3), followed by internalization of holo-24p3 and release of iron, thereby increasing intracellular iron concentration and leading to inhibition of apoptosis. Also binds iron-free LCN2 (apo-24p3), followed by internalization of apo-24p3 and its association with an intracellular siderophore, leading to iron chelation and iron transfer to the extracellular medium, thereby reducing intracellular iron concentration and resulting in apoptosis. In Homo sapiens (Human), this protein is Solute carrier family 22 member 17 (SLC22A17).